The following is a 787-amino-acid chain: Aconitate hydratase, mitochondrial (787 aa).

Residues 1–33 (MISTRLARAGALAPKSRLFLGTRAFATVGDSPL) constitute a mitochondrion transit peptide. Substrate contacts are provided by residues Q104 and 197-199 (DSH). Positions 390, 453, and 456 each coordinate [4Fe-4S] cluster. Substrate is bound by residues R479 and R484. The interval 529–559 (LQPPTGEGLPAKGYDPGRDTYQAPPADRSSV) is disordered. Substrate-binding positions include R612 and 675–676 (SR).

Belongs to the aconitase/IPM isomerase family. It depends on [4Fe-4S] cluster as a cofactor.

The protein resides in the mitochondrion. It carries out the reaction citrate = D-threo-isocitrate. It catalyses the reaction (2R)-homocitrate = cis-homoaconitate + H2O. It participates in carbohydrate metabolism; tricarboxylic acid cycle; isocitrate from oxaloacetate: step 2/2. Its pathway is amino-acid biosynthesis; L-lysine biosynthesis via AAA pathway; L-alpha-aminoadipate from 2-oxoglutarate: step 2/5. In terms of biological role, catalyzes the isomerization of citrate to isocitrate via cis-aconitate, a step in the citric acid cycle. Also catalyzes the reversible dehydration of (R)-homocitrate to cis-homoaconitate, a step in the alpha-aminoadipate pathway for lysine biosynthesis. The polypeptide is Aconitate hydratase, mitochondrial (acoA) (Aspergillus fumigatus (strain ATCC MYA-4609 / CBS 101355 / FGSC A1100 / Af293) (Neosartorya fumigata)).